Here is a 339-residue protein sequence, read N- to C-terminus: Ketol-acid reductoisomerase (NADP(+)) (339 aa).

Residues 1–182 form the KARI N-terminal Rossmann domain; that stretch reads MRVYYDRDAD…GGGRSGIIET (182 aa). Residues 24–27, Lys48, Ser51, Thr53, and 83–86 contribute to the NADP(+) site; these read YGSQ and DELQ. Residue His108 is part of the active site. Gly134 provides a ligand contact to NADP(+). Positions 183-328 constitute a KARI C-terminal knotted domain; sequence NFKEECETDL…AKLRGMMPWI (146 aa). Mg(2+) contacts are provided by Asp191, Glu195, Glu227, and Glu231. Ser252 serves as a coordination point for substrate.

The protein belongs to the ketol-acid reductoisomerase family. The cofactor is Mg(2+).

It carries out the reaction (2R)-2,3-dihydroxy-3-methylbutanoate + NADP(+) = (2S)-2-acetolactate + NADPH + H(+). The catalysed reaction is (2R,3R)-2,3-dihydroxy-3-methylpentanoate + NADP(+) = (S)-2-ethyl-2-hydroxy-3-oxobutanoate + NADPH + H(+). The protein operates within amino-acid biosynthesis; L-isoleucine biosynthesis; L-isoleucine from 2-oxobutanoate: step 2/4. It functions in the pathway amino-acid biosynthesis; L-valine biosynthesis; L-valine from pyruvate: step 2/4. Functionally, involved in the biosynthesis of branched-chain amino acids (BCAA). Catalyzes an alkyl-migration followed by a ketol-acid reduction of (S)-2-acetolactate (S2AL) to yield (R)-2,3-dihydroxy-isovalerate. In the isomerase reaction, S2AL is rearranged via a Mg-dependent methyl migration to produce 3-hydroxy-3-methyl-2-ketobutyrate (HMKB). In the reductase reaction, this 2-ketoacid undergoes a metal-dependent reduction by NADPH to yield (R)-2,3-dihydroxy-isovalerate. The polypeptide is Ketol-acid reductoisomerase (NADP(+)) (Sinorhizobium fredii (strain NBRC 101917 / NGR234)).